A 2382-amino-acid chain; its full sequence is Serine/threonine-protein kinase WNK1 (2382 aa).

2 disordered regions span residues 1–81 (MSGG…RFFR) and 95–203 (LPGL…QQDD). A phosphoserine mark is found at Ser15 and Ser19. Over residues 50-66 (RTEEYRRRRHTMDKDSR) the composition is skewed to basic and acidic residues. Thr60 carries the phosphothreonine modification. 2 stretches are compositionally biased toward low complexity: residues 95 to 108 (LPGL…PSIP) and 125 to 153 (VTAT…GPAP). 2 positions are modified to phosphoserine: Ser167 and Ser174. One can recognise a Protein kinase domain in the interval 221 to 479 (LKFDIEIGRG…IKDLLNHAFF (259 aa)). Ser231 lines the ATP pocket. Positions 283 and 299 each coordinate chloride. ATP is bound by residues 301-304 (TELM) and Lys351. The active-site Proton acceptor is the Asp368. Leu369 and Leu371 together coordinate chloride. A phosphoserine; by autocatalysis mark is found at Ser378 and Ser382. The autoinhibitory domain stretch occupies residues 488-555 (ELAEEDDGEK…VCEGDHKTMA (68 aa)). Residues 573–588 (QLVREEQEKKKQEESS) are compositionally biased toward basic and acidic residues. Disordered stretches follow at residues 573–779 (QLVR…QPQA), 1018–1041 (QPGG…STQG), and 1053–1119 (VAQT…SRPK). Over residues 598–614 (ASQTGIKQLPSASTGIP) the composition is skewed to polar residues. A compositionally biased stretch (low complexity) spans 615–625 (TASTTSASVST). The interval 628-638 (EPEEPEADQHQ) is interaction with KLHL3. The segment covering 637–689 (HQQLQYQQPSISVLSDGTVDSGQGSSVFTESRVSSQQTVSYGSQHEQAHSTGT) has biased composition (polar residues). Positions 709-779 (PPSSVAQGQS…TAQPVSQPQA (71 aa)) are enriched in low complexity. Residues 1025 to 1041 (QAPTTSSQQAVLESTQG) are compositionally biased toward polar residues. The span at 1053–1077 (VAQTQATQPTTLASSVDSAHSDVAS) shows a compositional bias: low complexity. Positions 1080 to 1090 (SDGNENVPSSS) are enriched in polar residues. Over residues 1098–1119 (TKRHYRKSVRSRSRHEKTSRPK) the composition is skewed to basic residues. Residues 1257–1260 (RFIV) carry the RFXV motif 1 motif. A Phosphoserine modification is found at Ser1261. Low complexity-rich tracts occupy residues 1457–1467 (SASAGGSTATP) and 1733–1745 (QVST…TSGV). Disordered regions lie at residues 1457–1476 (SASA…AVVS) and 1733–1790 (QVST…TQSQ). A Phosphothreonine modification is found at Thr1848. The short motif at 1859–1862 (RFQV) is the RFXV motif 2 element. The interval 1866-1948 (ADGAQKEGKN…QPTKVGRFQV (83 aa)) is disordered. The segment covering 1869-1884 (AQKEGKNKSEDAKSVH) has biased composition (basic and acidic residues). Residues 1887–1905 (SSTSESSVLSSSSPESTLV) are compositionally biased toward low complexity. Over residues 1927–1940 (KTTASEAKSDTGQP) the composition is skewed to polar residues. Short sequence motifs (RFXV motif) lie at residues 1945-1948 (RFQV) and 1957-1960 (RFSV). Phosphoserine occurs at positions 1978, 2002, 2011, 2012, 2027, 2029, and 2032. Residues 1994-2003 (PKKEKPELSE) are compositionally biased toward basic and acidic residues. 2 disordered regions span residues 1994–2069 (PKKE…DIED) and 2101–2196 (LYTK…NLYS). Residues 2035–2062 (QLSSKSLPSQNLSQSLSNSFNSSYMSSD) show a composition bias toward low complexity. Ser2121 is modified (phosphoserine). A compositionally biased stretch (basic residues) spans 2122-2134 (GRRRRPTKSKGSK). Residues 2135–2145 (SSRSSSLGNKS) are compositionally biased toward low complexity. Polar residues-rich tracts occupy residues 2146 to 2167 (PQLS…QQTL) and 2175 to 2196 (ESGQ…NLYS). The segment at 2241–2261 (SRKGTFTDDLHKLVDNWARDA) is amphipathic alpha-helix. Phosphoserine occurs at positions 2270 and 2286. The disordered stretch occupies residues 2332–2352 (PFGAQWSGTGGPAPQPLGQFQ). 2 positions are modified to phosphoserine: Ser2370 and Ser2372.

The protein belongs to the protein kinase superfamily. Ser/Thr protein kinase family. WNK subfamily. As to quaternary structure, interacts with WNK3. Interacts with WNK4; inhibiting the activity of WNK4. Interacts with SGK1; promoting its activation. Associates with the mTORC2 complex. Interacts with UVRAG. Interacts (via amphipathic alpha-helix region) with EMC2; promoting the ER membrane protein complex assembly. In terms of assembly, interacts with isoform 1; inhibiting isoform 1 activity. It depends on Mg(2+) as a cofactor. Post-translationally, autophosphorylated at Ser-378 and Ser-382, promoting its activity. Autophosphorylation at Ser-382 is inhibited by intracellular calcium. Phosphorylation at Thr-60 increases ability to activate SGK1. In terms of processing, ubiquitinated by the BCR(KLHL3) complex, leading to its degradation. Also ubiquitinated by the BCR(KLHL2) complex. May be O-glycosylated. In terms of tissue distribution, widely expressed, with highest levels observed in the testis, heart, kidney and skeletal muscle. As to expression, strong expression in dorsal root ganglia and spinal cord. This isoform is kidney-specific and specifically expressed in the distal convoluted tubule (DCT) and connecting tubule (CNT) of the nephron.

Its subcellular location is the cytoplasm. The protein resides in the nucleus. The protein localises to the cytoskeleton. It is found in the spindle. The enzyme catalyses L-seryl-[protein] + ATP = O-phospho-L-seryl-[protein] + ADP + H(+). The catalysed reaction is L-threonyl-[protein] + ATP = O-phospho-L-threonyl-[protein] + ADP + H(+). With respect to regulation, activated in response to hyperosmotic stress: cell shrinkage promotes formation of a membraneless compartment that concentrates WNK1 with its substrates, OXSR1/OSR1 and STK39/SPAK. Activation requires autophosphorylation of Ser-382 and, to a lower extent, Ser-378. Autophosphorylation and subsequent activation is inhibited by increases in intracellular ionic strength: Cl(-) potently inhibits WNK1 kinase activity via direct binding. Also inhibited by K(+) ions. Inhibited by small compounds staurosporine, tyrphostin 47, as well as Src tyrosine kinase inhibitors PP1 and PP2. Functionally, serine/threonine-protein kinase component of the WNK1-SPAK/OSR1 kinase cascade, which acts as a key regulator of blood pressure and regulatory volume increase by promoting ion influx. WNK1 mediates regulatory volume increase in response to hyperosmotic stress by acting as a molecular crowding sensor, which senses cell shrinkage and mediates formation of a membraneless compartment by undergoing liquid-liquid phase separation. The membraneless compartment concentrates WNK1 with its substrates, OXSR1/OSR1 and STK39/SPAK, promoting WNK1-dependent phosphorylation and activation of downstream kinases OXSR1/OSR1 and STK39/SPAK. Following activation, OXSR1/OSR1 and STK39/SPAK catalyze phosphorylation of ion cotransporters SLC12A1/NKCC2, SLC12A2/NKCC1, SLC12A5/KCC2 and SLC12A6/KCC3, regulating their activity. Phosphorylation of Na-K-Cl cotransporters SLC12A2/NKCC1 and SLC12A2/NKCC1 promote their activation and ion influx; simultaneously, phosphorylation of K-Cl cotransporters SLC12A5/KCC2 and SLC12A6/KCC3 inhibit their activity, blocking ion efflux. Also acts as a regulator of angiogenesis in endothelial cells via activation of OXSR1/OSR1 and STK39/SPAK: activation of OXSR1/OSR1 regulates chemotaxis and invasion, while STK39/SPAK regulates endothelial cell proliferation. Also acts independently of the WNK1-SPAK/OSR1 kinase cascade by catalyzing phosphorylation of other substrates, such as SYT2, PCF11 and NEDD4L. Mediates phosphorylation of SYT2, regulating SYT2 association with phospholipids and membrane-binding. Regulates mRNA export in the nucleus by mediating phosphorylation of PCF11, thereby decreasing the association between PCF11 and POLR2A/RNA polymerase II and promoting mRNA export to the cytoplasm. Acts as a negative regulator of autophagy. Required for the abscission step during mitosis, independently of the WNK1-SPAK/OSR1 kinase cascade. May also play a role in actin cytoskeletal reorganization. Also acts as a scaffold protein independently of its protein kinase activity: negatively regulates cell membrane localization of various transporters and channels, such as SLC4A4, SLC26A6, SLC26A9, TRPV4 and CFTR. Involved in the regulation of epithelial Na(+) channel (ENaC) by promoting activation of SGK1 in a kinase-independent manner: probably acts as a scaffold protein that promotes the recruitment of SGK1 to the mTORC2 complex in response to chloride, leading to mTORC2-dependent phosphorylation and activation of SGK1. Acts as an assembly factor for the ER membrane protein complex independently of its protein kinase activity: associates with EMC2 in the cytoplasm via its amphipathic alpha-helix, and prevents EMC2 ubiquitination and subsequent degradation, thereby promoting EMC2 stabilization. In terms of biological role, kinase-defective isoform specifically expressed in kidney, which acts as a dominant-negative regulator of the longer isoform 1. Does not directly inhibit WNK4 and has no direct effect on sodium and chloride ion transport. Down-regulates sodium-chloride cotransporter activity indirectly by inhibiting isoform 1, it associates with isoform 1 and attenuates its kinase activity. In kidney, may play an important role regulating sodium and potassium balance. In Homo sapiens (Human), this protein is Serine/threonine-protein kinase WNK1.